The chain runs to 59 residues: U-scoloptoxin(23)-Er2a (59 aa).

Belongs to the scoloptoxin-23 family. In terms of processing, contains 1 disulfide bond. In terms of tissue distribution, expressed by the venom gland.

Its subcellular location is the secreted. This Ethmostigmus rubripes (Giant centipede) protein is U-scoloptoxin(23)-Er2a.